Here is a 987-residue protein sequence, read N- to C-terminus: Centrosomal protein of 120 kDa (987 aa).

The 112-residue stretch at 1 to 112 (MVSKSDQLLI…QETKQAPKWY (112 aa)) folds into the C2 1 domain. Positions 352 to 408 (KTQNEHEPHHSKKRVLTPIKENTHTGPQSPSESPVPPHNQSPPTKDDATESEVESLL) are disordered. The 130-residue stretch at 438–567 (SEAASGQKIA…LSSEKTRFLG (130 aa)) folds into the C2 2 domain. The stretch at 670–919 (ENQLKQKELA…RLRQQEQKQY (250 aa)) forms a coiled coil. Residues 912–926 (RQQEQKQYPDSREIA) are compositionally biased toward basic and acidic residues. The interval 912-937 (RQQEQKQYPDSREIASGKMDGPHGSA) is disordered. Residue Ser-936 is modified to Phosphoserine.

Belongs to the CEP120 family. As to quaternary structure, interacts with TACC2 and TACC3. Interacts with CCDC52.

It localises to the cytoplasm. The protein resides in the cytoskeleton. Its subcellular location is the microtubule organizing center. It is found in the centrosome. Functionally, plays a role in the microtubule-dependent coupling of the nucleus and the centrosome. Involved in the processes that regulate centrosome-mediated interkinetic nuclear migration (INM) of neural progenitors and for proper positioning of neurons during brain development. Also implicated in the migration and selfrenewal of neural progenitors. May play a role in centriole duplication during mitosis. Required for the recruitment of CEP295 to the proximal end of new-born centrioles at the centriolar microtubule wall during early S phase in a PLK4-dependent manner. This is Centrosomal protein of 120 kDa (CEP120) from Bos taurus (Bovine).